Consider the following 607-residue polypeptide: UvrABC system protein C (607 aa).

One can recognise a GIY-YIG domain in the interval 16-94 (HLPGVYRHLD…IKSLRPRYNI (79 aa)). The region spanning 203-238 (REVMDEIEARMQQASGELRFEEAAVLRDQMGSLSKV) is the UVR domain.

Belongs to the UvrC family. In terms of assembly, interacts with UvrB in an incision complex.

It localises to the cytoplasm. Functionally, the UvrABC repair system catalyzes the recognition and processing of DNA lesions. UvrC both incises the 5' and 3' sides of the lesion. The N-terminal half is responsible for the 3' incision and the C-terminal half is responsible for the 5' incision. This is UvrABC system protein C from Bordetella avium (strain 197N).